A 259-amino-acid polypeptide reads, in one-letter code: uncharacterized protein (259 aa).

This sequence belongs to the methyltransferase superfamily.

This is an uncharacterized protein from Mycobacteroides abscessus (strain ATCC 19977 / DSM 44196 / CCUG 20993 / CIP 104536 / JCM 13569 / NCTC 13031 / TMC 1543 / L948) (Mycobacterium abscessus).